The sequence spans 279 residues: Putative ABC transporter ATP-binding protein CA_C1368 (279 aa).

Residues 4-239 (ISINNVDYIY…KKVLRNINLR (236 aa)) enclose the ABC transporter domain. 37–44 (GPNGAGKS) is an ATP binding site.

The protein belongs to the ABC transporter superfamily.

It is found in the cell membrane. Functionally, probably part of an ABC transporter complex. Responsible for energy coupling to the transport system. The chain is Putative ABC transporter ATP-binding protein CA_C1368 from Clostridium acetobutylicum (strain ATCC 824 / DSM 792 / JCM 1419 / IAM 19013 / LMG 5710 / NBRC 13948 / NRRL B-527 / VKM B-1787 / 2291 / W).